Reading from the N-terminus, the 615-residue chain is Zinc metalloproteinase R519 (615 aa).

The Peptidase M13 domain maps to 1–611; sequence MTYRSCIPQN…LDPQLRSRIL (611 aa). His-454 serves as a coordination point for Zn(2+). Glu-455 is an active-site residue. The Zn(2+) site is built by His-458 and Glu-513. The Proton donor role is filled by Asp-517.

This sequence belongs to the peptidase M13 family. Requires Zn(2+) as cofactor.

Its function is as follows. Zinc metalloprotease. This Acanthamoeba polyphaga (Amoeba) protein is Zinc metalloproteinase R519.